Reading from the N-terminus, the 250-residue chain is ATP synthase subunit a (250 aa).

6 consecutive transmembrane segments (helical) span residues 29–49 (ASLF…FATS), 84–104 (FFPL…LGMF), 114–134 (IIVT…YGFY), 143–163 (VFVP…IEII), 193–213 (FVAS…LPLI), and 216–236 (VALT…FAVL).

It belongs to the ATPase A chain family. As to quaternary structure, F-type ATPases have 2 components, CF(1) - the catalytic core - and CF(0) - the membrane proton channel. CF(1) has five subunits: alpha(3), beta(3), gamma(1), delta(1), epsilon(1). CF(0) has three main subunits: a(1), b(2) and c(9-12). The alpha and beta chains form an alternating ring which encloses part of the gamma chain. CF(1) is attached to CF(0) by a central stalk formed by the gamma and epsilon chains, while a peripheral stalk is formed by the delta and b chains.

It is found in the cell inner membrane. In terms of biological role, key component of the proton channel; it plays a direct role in the translocation of protons across the membrane. This chain is ATP synthase subunit a, found in Rhizobium leguminosarum bv. trifolii (strain WSM2304).